The chain runs to 305 residues: Oxidoreductase OpS7 (305 aa).

Belongs to the oxidoreductase OpS7 family.

The protein operates within secondary metabolite biosynthesis. Functionally, oxidoreductase; part of the gene cluster that mediates the biosynthesis of the bibenzoquinone oosporein, a metabolite required for fungal virulence that acts by evading host immunity to facilitate fungal multiplication in insects. The non-reducing polyketide synthase OpS1 produces orsellinic acid by condensing acetyl-CoA with 3 malonyl-CoA units. Orsellinic acid is then hydroxylated to benzenetriol by the hydroxylase OpS4. The intermediate is oxidized either nonenzymatically to 5,5'-dideoxy-oosporein or enzymatically to benzenetetrol by the oxidoreductase OpS7. The latter is further dimerized to oosporein by the catalase OpS5. OpS6 probably functions en route for protecting cells against oxidative stress by scavenging any leaked free radical form of benzenetetrol by activating the thiol group of glutathione. The chain is Oxidoreductase OpS7 from Beauveria bassiana (strain ARSEF 2860) (White muscardine disease fungus).